A 207-amino-acid chain; its full sequence is dTTP/UTP pyrophosphatase (207 aa).

The active-site Proton acceptor is Asp-80.

Belongs to the Maf family. YhdE subfamily. A divalent metal cation is required as a cofactor.

Its subcellular location is the cytoplasm. The catalysed reaction is dTTP + H2O = dTMP + diphosphate + H(+). It catalyses the reaction UTP + H2O = UMP + diphosphate + H(+). Nucleoside triphosphate pyrophosphatase that hydrolyzes dTTP and UTP. May have a dual role in cell division arrest and in preventing the incorporation of modified nucleotides into cellular nucleic acids. The polypeptide is dTTP/UTP pyrophosphatase (maf1) (Agrobacterium fabrum (strain C58 / ATCC 33970) (Agrobacterium tumefaciens (strain C58))).